Consider the following 304-residue polypeptide: Aspartate carbamoyltransferase catalytic subunit (304 aa).

The carbamoyl phosphate site is built by arginine 49 and threonine 50. L-aspartate is bound at residue lysine 77. Carbamoyl phosphate is bound by residues arginine 99, histidine 127, and glutamine 130. Residues arginine 160 and arginine 211 each coordinate L-aspartate. Alanine 250 and proline 251 together coordinate carbamoyl phosphate.

It belongs to the aspartate/ornithine carbamoyltransferase superfamily. ATCase family. Heterododecamer (2C3:3R2) of six catalytic PyrB chains organized as two trimers (C3), and six regulatory PyrI chains organized as three dimers (R2).

It carries out the reaction carbamoyl phosphate + L-aspartate = N-carbamoyl-L-aspartate + phosphate + H(+). The protein operates within pyrimidine metabolism; UMP biosynthesis via de novo pathway; (S)-dihydroorotate from bicarbonate: step 2/3. Catalyzes the condensation of carbamoyl phosphate and aspartate to form carbamoyl aspartate and inorganic phosphate, the committed step in the de novo pyrimidine nucleotide biosynthesis pathway. In Bacillus velezensis (strain DSM 23117 / BGSC 10A6 / LMG 26770 / FZB42) (Bacillus amyloliquefaciens subsp. plantarum), this protein is Aspartate carbamoyltransferase catalytic subunit.